Consider the following 923-residue polypeptide: RNA polymerase-associated protein RapA (923 aa).

The 171-residue stretch at 162-332 folds into the Helicase ATP-binding domain; sequence EVGNRVNPRV…FARLRLLDPE (171 aa). 175-182 contacts ATP; sequence DEVGLGKT. Positions 278 to 281 match the DEAH box motif; it reads DEAH. Residues 443 to 597 form the Helicase C-terminal domain; that stretch reads KIDWLIDFLK…TCPMGMALFS (155 aa).

Belongs to the SNF2/RAD54 helicase family. RapA subfamily. In terms of assembly, interacts with the RNAP. Has a higher affinity for the core RNAP than for the holoenzyme. Its ATPase activity is stimulated by binding to RNAP.

Functionally, transcription regulator that activates transcription by stimulating RNA polymerase (RNAP) recycling in case of stress conditions such as supercoiled DNA or high salt concentrations. Probably acts by releasing the RNAP, when it is trapped or immobilized on tightly supercoiled DNA. Does not activate transcription on linear DNA. Probably not involved in DNA repair. The sequence is that of RNA polymerase-associated protein RapA from Haemophilus influenzae (strain ATCC 51907 / DSM 11121 / KW20 / Rd).